The chain runs to 391 residues: Formate-dependent phosphoribosylglycinamide formyltransferase (391 aa).

N(1)-(5-phospho-beta-D-ribosyl)glycinamide-binding positions include 20 to 21 (EL) and E80. ATP-binding positions include R112, K153, 158–163 (SSGKGQ), 193–196 (EGFI), and E201. The ATP-grasp domain maps to 117–306 (RLAAETLGLP…EFALHVRAIL (190 aa)). The Mg(2+) site is built by E265 and E277. N(1)-(5-phospho-beta-D-ribosyl)glycinamide-binding positions include D284, K354, and 361-362 (RR).

This sequence belongs to the PurK/PurT family. As to quaternary structure, homodimer.

It carries out the reaction N(1)-(5-phospho-beta-D-ribosyl)glycinamide + formate + ATP = N(2)-formyl-N(1)-(5-phospho-beta-D-ribosyl)glycinamide + ADP + phosphate + H(+). It participates in purine metabolism; IMP biosynthesis via de novo pathway; N(2)-formyl-N(1)-(5-phospho-D-ribosyl)glycinamide from N(1)-(5-phospho-D-ribosyl)glycinamide (formate route): step 1/1. Involved in the de novo purine biosynthesis. Catalyzes the transfer of formate to 5-phospho-ribosyl-glycinamide (GAR), producing 5-phospho-ribosyl-N-formylglycinamide (FGAR). Formate is provided by PurU via hydrolysis of 10-formyl-tetrahydrofolate. The protein is Formate-dependent phosphoribosylglycinamide formyltransferase of Shewanella sp. (strain MR-7).